The following is a 399-amino-acid chain: 1-deoxy-D-xylulose 5-phosphate reductoisomerase (399 aa).

NADPH contacts are provided by threonine 16, glycine 17, serine 18, isoleucine 19, glycine 42, arginine 43, asparagine 44, and asparagine 127. Lysine 128 lines the 1-deoxy-D-xylulose 5-phosphate pocket. Glutamate 129 provides a ligand contact to NADPH. Aspartate 153 lines the Mn(2+) pocket. Residues serine 154, glutamate 155, serine 179, and histidine 202 each contribute to the 1-deoxy-D-xylulose 5-phosphate site. Glutamate 155 lines the Mn(2+) pocket. Glycine 208 contributes to the NADPH binding site. Serine 215, asparagine 220, lysine 221, and glutamate 224 together coordinate 1-deoxy-D-xylulose 5-phosphate. Residue glutamate 224 coordinates Mn(2+).

This sequence belongs to the DXR family. Mg(2+) serves as cofactor. Mn(2+) is required as a cofactor.

It catalyses the reaction 2-C-methyl-D-erythritol 4-phosphate + NADP(+) = 1-deoxy-D-xylulose 5-phosphate + NADPH + H(+). It participates in isoprenoid biosynthesis; isopentenyl diphosphate biosynthesis via DXP pathway; isopentenyl diphosphate from 1-deoxy-D-xylulose 5-phosphate: step 1/6. Functionally, catalyzes the NADPH-dependent rearrangement and reduction of 1-deoxy-D-xylulose-5-phosphate (DXP) to 2-C-methyl-D-erythritol 4-phosphate (MEP). This Caulobacter vibrioides (strain NA1000 / CB15N) (Caulobacter crescentus) protein is 1-deoxy-D-xylulose 5-phosphate reductoisomerase.